We begin with the raw amino-acid sequence, 271 residues long: Elongation factor Ts (271 aa).

The tract at residues 76-79 (TDFV) is involved in Mg(2+) ion dislocation from EF-Tu.

The protein belongs to the EF-Ts family.

The protein resides in the cytoplasm. Associates with the EF-Tu.GDP complex and induces the exchange of GDP to GTP. It remains bound to the aminoacyl-tRNA.EF-Tu.GTP complex up to the GTP hydrolysis stage on the ribosome. This is Elongation factor Ts from Mycobacterium ulcerans (strain Agy99).